Consider the following 307-residue polypeptide: MSIDIEVGTKVTVQVPASSANLGPGYDTLGIALSLYDTVEVEVTRSGLEVEIFGEGAEELPRDGSHLVVKAIRSALKAADVEVTGLRVVCTNNIPQSRGLGSSASAAVAGVAAGNGLAGFPLSEEQVVQLSSAFEGHPDNAAASVLGNAVVSWTTVPVDGRSLPEYRAATLEVHPSIKATALVPDFHASTQAVRRVLPSHVTHADAAFNVSRTAVNVAALTAYPDLLWEGTRDRLHQPYRADVLPVTAEWVNRLRNRGYAAYLSGAGPTVMVLHTEPIEEAILDDAREQNLRVLELEVAGPVSVERG.

95–105 (PQSRGLGSSAS) serves as a coordination point for ATP.

It belongs to the GHMP kinase family. Homoserine kinase subfamily.

The protein localises to the cytoplasm. It catalyses the reaction L-homoserine + ATP = O-phospho-L-homoserine + ADP + H(+). It functions in the pathway amino-acid biosynthesis; L-threonine biosynthesis; L-threonine from L-aspartate: step 4/5. Its function is as follows. Catalyzes the ATP-dependent phosphorylation of L-homoserine to L-homoserine phosphate. The chain is Homoserine kinase from Corynebacterium aurimucosum (strain ATCC 700975 / DSM 44827 / CIP 107346 / CN-1) (Corynebacterium nigricans).